Reading from the N-terminus, the 101-residue chain is Protein SSXA1 (101 aa).

Positions 19 to 83 constitute a KRAB-related domain; the sequence is ETCQAFEDIS…ERVTKSVLSD (65 aa). The tract at residues 73–101 is disordered; that stretch reads KERVTKSVLSDSDEVSSHESQDKRKNPVV. A compositionally biased stretch (basic and acidic residues) spans 87–101; it reads VSSHESQDKRKNPVV.

Belongs to the SSX family. As to expression, specifically expressed in testis (at protein level). Not detected in other tissues tested (at protein level).

Its subcellular location is the nucleus. Functionally, could act as a modulator of transcription. The protein is Protein SSXA1 of Mus musculus (Mouse).